The following is a 964-amino-acid chain: Integrator complex subunit 4 (964 aa).

At Lys-27 the chain carries N6-acetyllysine. HEAT repeat units follow at residues Ala-67 to Phe-106, Gln-146 to Ser-184, Gly-191 to Lys-229, Leu-230 to Tyr-264, Ile-278 to Ser-314, Asn-370 to Ser-406, Pro-407 to Leu-445, and Glu-447 to Leu-485. Lys-792 participates in a covalent cross-link: Glycyl lysine isopeptide (Lys-Gly) (interchain with G-Cter in SUMO1); alternate. Lys-792 participates in a covalent cross-link: Glycyl lysine isopeptide (Lys-Gly) (interchain with G-Cter in SUMO2); alternate.

The protein belongs to the Integrator subunit 4 family. In terms of assembly, component of the Integrator complex, composed of core subunits INTS1, INTS2, INTS3, INTS4, INTS5, INTS6, INTS7, INTS8, INTS9/RC74, INTS10, INTS11/CPSF3L, INTS12, INTS13, INTS14 and INTS15. The core complex associates with protein phosphatase 2A subunits PPP2CA and PPP2R1A, to form the Integrator-PP2A (INTAC) complex. INTS4 is part of the RNA endonuclease subcomplex, composed of INTS4, INTS9, INTS11 and inositol hexakisphosphate (InsP6). Interacts with BRAT1; interaction is required for the assembly of the RNA endonuclease subcomplex.

It is found in the nucleus. It localises to the cytoplasm. Component of the integrator complex, a multiprotein complex that terminates RNA polymerase II (Pol II) transcription in the promoter-proximal region of genes. The integrator complex provides a quality checkpoint during transcription elongation by driving premature transcription termination of transcripts that are unfavorably configured for transcriptional elongation: the complex terminates transcription by (1) catalyzing dephosphorylation of the C-terminal domain (CTD) of Pol II subunit POLR2A/RPB1 and SUPT5H/SPT5, (2) degrading the exiting nascent RNA transcript via endonuclease activity and (3) promoting the release of Pol II from bound DNA. The integrator complex is also involved in terminating the synthesis of non-coding Pol II transcripts, such as enhancer RNAs (eRNAs), small nuclear RNAs (snRNAs), telomerase RNAs and long non-coding RNAs (lncRNAs). Within the integrator complex, INTS4 acts as an scaffold that links INTS9 and INTS11. Mediates recruitment of cytoplasmic dynein to the nuclear envelope, probably as component of the integrator complex. This is Integrator complex subunit 4 (Ints4) from Mus musculus (Mouse).